The primary structure comprises 492 residues: Ketol-acid reductoisomerase (NADP(+)) (492 aa).

One can recognise a KARI N-terminal Rossmann domain in the interval 14–208; the sequence is LDQLGKCRFM…GGHRAGVLQS (195 aa). NADP(+)-binding positions include 45 to 48, Arg68, Arg76, Ser78, and 108 to 110; these read CGAQ and DKQ. His132 is a catalytic residue. NADP(+) is bound at residue Gly158. KARI C-terminal knotted domains lie at 209–344 and 345–485; these read SFVA…NAPQ and FDGK…MKDM. Residues Asp217, Glu221, Glu389, and Glu393 each contribute to the Mg(2+) site. Ser414 is a binding site for substrate.

It belongs to the ketol-acid reductoisomerase family. It depends on Mg(2+) as a cofactor.

The catalysed reaction is (2R)-2,3-dihydroxy-3-methylbutanoate + NADP(+) = (2S)-2-acetolactate + NADPH + H(+). It catalyses the reaction (2R,3R)-2,3-dihydroxy-3-methylpentanoate + NADP(+) = (S)-2-ethyl-2-hydroxy-3-oxobutanoate + NADPH + H(+). It functions in the pathway amino-acid biosynthesis; L-isoleucine biosynthesis; L-isoleucine from 2-oxobutanoate: step 2/4. The protein operates within amino-acid biosynthesis; L-valine biosynthesis; L-valine from pyruvate: step 2/4. Involved in the biosynthesis of branched-chain amino acids (BCAA). Catalyzes an alkyl-migration followed by a ketol-acid reduction of (S)-2-acetolactate (S2AL) to yield (R)-2,3-dihydroxy-isovalerate. In the isomerase reaction, S2AL is rearranged via a Mg-dependent methyl migration to produce 3-hydroxy-3-methyl-2-ketobutyrate (HMKB). In the reductase reaction, this 2-ketoacid undergoes a metal-dependent reduction by NADPH to yield (R)-2,3-dihydroxy-isovalerate. The chain is Ketol-acid reductoisomerase (NADP(+)) from Pectobacterium atrosepticum (strain SCRI 1043 / ATCC BAA-672) (Erwinia carotovora subsp. atroseptica).